Here is a 110-residue protein sequence, read N- to C-terminus: UPF0367 protein Syncc9605_2376 (110 aa).

It belongs to the UPF0367 family.

This Synechococcus sp. (strain CC9605) protein is UPF0367 protein Syncc9605_2376.